Here is a 116-residue protein sequence, read N- to C-terminus: HTH-type transcriptional regulator AnsR (116 aa).

Residues 6-60 form the HTH cro/C1-type domain; sequence LTELRKKKNWSLQYTADLLGIAKSTYAGYESGYRRPSLEALAMLADLFDTTCDEL. A DNA-binding region (H-T-H motif) is located at residues 17 to 36; the sequence is LQYTADLLGIAKSTYAGYES.

In terms of biological role, transcriptional repressor for the ans operon coding for L-asparaginase and L-aspartase. NH4(+) may influence this repression. This is HTH-type transcriptional regulator AnsR (ansR) from Bacillus subtilis (strain 168).